A 208-amino-acid polypeptide reads, in one-letter code: Probable nicotinate-nucleotide adenylyltransferase (208 aa).

The protein belongs to the NadD family.

The enzyme catalyses nicotinate beta-D-ribonucleotide + ATP + H(+) = deamido-NAD(+) + diphosphate. It functions in the pathway cofactor biosynthesis; NAD(+) biosynthesis; deamido-NAD(+) from nicotinate D-ribonucleotide: step 1/1. Functionally, catalyzes the reversible adenylation of nicotinate mononucleotide (NaMN) to nicotinic acid adenine dinucleotide (NaAD). This Acidothermus cellulolyticus (strain ATCC 43068 / DSM 8971 / 11B) protein is Probable nicotinate-nucleotide adenylyltransferase.